A 457-amino-acid chain; its full sequence is Putative HD domain-containing protein L394 (457 aa).

Residues 65-206 (RLEHSIGVYD…GIDVDKFDYL (142 aa)) enclose the HD domain.

In Acanthamoeba polyphaga mimivirus (APMV), this protein is Putative HD domain-containing protein L394.